Consider the following 642-residue polypeptide: Chaperone protein HtpG (642 aa).

Residues Met-1 to Arg-349 are a; substrate-binding. Residues Glu-216–Glu-238 are disordered. Residues Lys-224–Glu-236 are compositionally biased toward basic and acidic residues. The interval Glu-350–Arg-570 is b. Residues Leu-571–Gly-642 form a c region.

It belongs to the heat shock protein 90 family. As to quaternary structure, homodimer.

The protein localises to the cytoplasm. Molecular chaperone. Has ATPase activity. The protein is Chaperone protein HtpG of Magnetococcus marinus (strain ATCC BAA-1437 / JCM 17883 / MC-1).